Consider the following 623-residue polypeptide: MKLPAVLEERRAAATDRSTLSNYEDFAVRHTNLELEVAFDERQIRAEVCYDLEQTGKGVAEVHLDTSYVQLECILVDGKRVPWELRERQEPLGSQLVITPEGGLPARFQLTCRSVTTARSTAVQWLGGAQTAGKPYVYTQLESVHARSLVPCFDTPACKSPFTVRVRSPLRAVVAGQEQPGSGKDGVYVFEQPVPIPIYLLGLAAGDIACAPLGPRSNVYCEPALLEAAAGEFGGEIERFLDAAEELLPRYIWGNYNLLVCPSSYPYGGMEVAGTSFISPSVIAYDRSNNDLIVHEMAHSWSGNLITNANWGHFWLNEGWTVYLERRITGALHGEDTRQFSSLLGMAELEVAIRASNGASFALVEDVSESVNPDNVVSLAAYEKGSALLLHLERELGGTAAFDPFIKHYFGKFGGQSLTTWQFLDILFDFFADKREKLERIDWKTWLFAPGMPPKLTYSTSLADDVYDLAEQWLEKAVQLRLPEEFAAEFSGSVLAAFTTAQQILFLNTIIQGGVSPDNTFDWTQHPVAAAALLSVYADTLGKSRNQEIIYRRYNFQLTAGMEDAYPEITTWLGSTGRMKHVRPIYRRLASIDKALAASTFQEHREKYHPICRAAIQADLGLS.

Residues 140 to 142 and 266 to 271 each bind a peptide; these read QLE and PYGGME. Histidine 295 provides a ligand contact to Zn(2+). The active-site Proton acceptor is glutamate 296. Zn(2+) is bound by residues histidine 299 and glutamate 318. Tyrosine 382 serves as the catalytic Proton donor.

This sequence belongs to the peptidase M1 family. Zn(2+) is required as a cofactor.

The protein localises to the cytoplasm. The protein resides in the nucleus. It catalyses the reaction an epoxide + H2O = an ethanediol. Aminopeptidase that preferentially cleaves di- and tripeptides. Also has low epoxide hydrolase activity (in vitro). Can hydrolyze the epoxide leukotriene LTA(4) but it forms preferentially 5,6-dihydroxy-7,9,11,14-eicosatetraenoic acid rather than the cytokine leukotriene B(4) as the product compared to the homologous mammalian enzyme (in vitro). The protein is Leucine aminopeptidase 2 of Eremothecium gossypii (strain ATCC 10895 / CBS 109.51 / FGSC 9923 / NRRL Y-1056) (Yeast).